We begin with the raw amino-acid sequence, 214 residues long: Thymidylate kinase (214 aa).

7-14 (GIEGAGKT) provides a ligand contact to ATP.

This sequence belongs to the thymidylate kinase family.

The catalysed reaction is dTMP + ATP = dTDP + ADP. Functionally, phosphorylation of dTMP to form dTDP in both de novo and salvage pathways of dTTP synthesis. This is Thymidylate kinase from Desulfosudis oleivorans (strain DSM 6200 / JCM 39069 / Hxd3) (Desulfococcus oleovorans).